Reading from the N-terminus, the 54-residue chain is TATVDCSGYPQSACPQDYVPFCGSDNKTYSNKCNFCNAVADSNGTLTLSHFGKC.

The region spanning 4 to 54 is the Kazal-like domain; sequence VDCSGYPQSACPQDYVPFCGSDNKTYSNKCNFCNAVADSNGTLTLSHFGKC. Disulfide bonds link cysteine 6–cysteine 36, cysteine 14–cysteine 33, and cysteine 22–cysteine 54. Asparagine 43 is a glycosylation site (N-linked (GlcNAc...) asparagine).

The protein resides in the secreted. In Gallirallus australis (Weka), this protein is Ovomucoid.